Here is a 293-residue protein sequence, read N- to C-terminus: Probable metal transport system membrane protein CPn_0543/CP_0209/CPj0543/CpB0565 (293 aa).

7 consecutive transmembrane segments (helical) span residues 12 to 32 (LLILLPTFLAALGASVAGGVM), 41 to 61 (IVSISGSISHAILGGIGLTLW), 68 to 88 (LSFFPMYGAIVGAIFLALCIG), 101 to 121 (LIAMIWSVGMAIGIIFISRLP), 140 to 160 (PSDLYSLGIFDLLVLGIVVLC), 183 to 203 (LWYFLLLVLTAITIVMLIYVM), and 253 to 273 (FPVGPTISLLMGLGYTASLCV).

Belongs to the ABC-3 integral membrane protein family.

Its subcellular location is the cell inner membrane. Its function is as follows. Part of an ATP-driven transport system CPn_0541/CPn_0542/CPn_0543 for a metal. This chain is Probable metal transport system membrane protein CPn_0543/CP_0209/CPj0543/CpB0565, found in Chlamydia pneumoniae (Chlamydophila pneumoniae).